Consider the following 207-residue polypeptide: Urease accessory protein UreG (207 aa).

Residue 12–19 participates in GTP binding; that stretch reads GPVGAGKT.

It belongs to the SIMIBI class G3E GTPase family. UreG subfamily. In terms of assembly, homodimer. UreD, UreF and UreG form a complex that acts as a GTP-hydrolysis-dependent molecular chaperone, activating the urease apoprotein by helping to assemble the nickel containing metallocenter of UreC. The UreE protein probably delivers the nickel.

It localises to the cytoplasm. Its function is as follows. Facilitates the functional incorporation of the urease nickel metallocenter. This process requires GTP hydrolysis, probably effectuated by UreG. The polypeptide is Urease accessory protein UreG (Cereibacter sphaeroides (strain ATCC 17029 / ATH 2.4.9) (Rhodobacter sphaeroides)).